Reading from the N-terminus, the 447-residue chain is MRKLFGTDGVRGKANMHPMTAEMALRIGAAVGRYFRRENDTVHRVVIGKDTRLSGYMFENALTAGLTSTGMNVLLLGPVPTPAVGLMTRSMRADLGVMISASHNPAEDNGIKFFGPDGYKLSDEVELELEALIEAGVEPAQAQNIGRAKRIDDARFRYGERVKSSLPRDMRLDGLKVVIDCANGAAHRAAPEILWELGADVIPVGVSPDGLNINRGCGSTQPAAAAETVVAHGADVGICLDGDADRVVVIDETGTVADGDQLMALLASAWSADGRLSGGALVATVMSNLGLERFLNERGIGLERTGVGDRYVVERMRQGGFNLGGEQSGHIVMSDYATTGDGLMAGLHFLAEMVRRGQKASELARQFEPVPQLLKNVRFEAGQAPLEADQVQTAIAEAEKQLNGRGRLLIRKSGTEPLIRVMAESEDPVLLNRAVDDVVAAVEAATQ.

Residue serine 102 is the Phosphoserine intermediate of the active site. The Mg(2+) site is built by serine 102, aspartate 241, aspartate 243, and aspartate 245. Serine 102 is modified (phosphoserine).

It belongs to the phosphohexose mutase family. It depends on Mg(2+) as a cofactor. Post-translationally, activated by phosphorylation.

The catalysed reaction is alpha-D-glucosamine 1-phosphate = D-glucosamine 6-phosphate. In terms of biological role, catalyzes the conversion of glucosamine-6-phosphate to glucosamine-1-phosphate. The sequence is that of Phosphoglucosamine mutase from Ruegeria sp. (strain TM1040) (Silicibacter sp.).